We begin with the raw amino-acid sequence, 512 residues long: Maturase K (512 aa).

The protein belongs to the intron maturase 2 family. MatK subfamily.

The protein localises to the plastid. It is found in the chloroplast. In terms of biological role, usually encoded in the trnK tRNA gene intron. Probably assists in splicing its own and other chloroplast group II introns. In Oenothera biennis (German evening primrose), this protein is Maturase K.